The sequence spans 92 residues: Parbolysin P7 (92 aa).

Intrachain disulfides connect cysteine 15-cysteine 36, cysteine 21-cysteine 32, and cysteine 46-cysteine 59.

The protein belongs to the worm cytolysin family. In terms of tissue distribution, localized within the skin and proboscis and are most readily isolated from body mucus secretions.

It is found in the secreted. Cytolysin that shows hemolytic activity (on bovine erythrocytes, HC(50)=5.75 mg/ml). This hemolytic activity is completely inhibited by small unilamelar vesicles composed of PC/PG, PC/PI and PC/PS in 1:1 molar ratios (with at least 100 mg/ml concentration). This Parborlasia corrugatus (Antarctic nemertean worm) protein is Parbolysin P7.